Reading from the N-terminus, the 201-residue chain is Ras-related protein Rab-1B (201 aa).

Met1 bears the N-acetylmethionine mark. Positions 17, 18, 19, 20, 21, 22, 23, 33, 34, 35, 36, 39, and 40 each coordinate GTP. Ser22 is a binding site for Mg(2+). Residues 30-45 (DDTYTESYISTIGVDF) carry the Switch 1 motif. Mg(2+) contacts are provided by Thr40 and Asp63. The switch 2 region; Required for interaction with REP1/CHM stretch occupies residues 64-83 (TAGQERFRTITSSYYRGAHG). The short motif at 65–80 (AGQERFRTITSSYYRG) is the Switch 2 element. Positions 66, 121, 122, 124, 151, 152, and 153 each coordinate GTP. Residues 173 to 201 (MGPGAASGGERPNLKIDSTPVKQAGGGCC) are disordered. S-geranylgeranyl cysteine attachment occurs at residues Cys200 and Cys201. A Cysteine methyl ester modification is found at Cys201.

The protein belongs to the small GTPase superfamily. Rab family. Interacts with MICAL1 and MICAL2. Interacts (in GTP-bound form) with MICALCL, MICAL1 and MILCAL3. Interacts with GDI1; the interaction requires the GDP-bound state. Interacts with CHM/REP1; the interaction requires the GDP-bound form and is necessary for prenylation by GGTase II. Interacts with RabGAP TBC1D20. Interacts (in GDP-bound form) with lipid phosphatase MTMR6 (via GRAM domain); the interaction regulates MTMR6 recruitment to the endoplasmic reticulum-Golgi intermediate compartment. Interacts (in GDP-bound form) with lipid phosphatase MTMR7. Requires Mg(2+) as cofactor. Prenylated; by GGTase II, only after interaction of the substrate with Rab escort protein 1 (REP1).

The protein localises to the cytoplasm. Its subcellular location is the membrane. It is found in the preautophagosomal structure membrane. The protein resides in the perinuclear region. It carries out the reaction GTP + H2O = GDP + phosphate + H(+). Regulated by guanine nucleotide exchange factors (GEFs) which promote the exchange of bound GDP for free GTP. Regulated by GTPase activating proteins (GAPs) including TBC1D20 which increases the GTP hydrolysis activity. Inhibited by GDP dissociation inhibitors (GDIs). Its function is as follows. The small GTPases Rab are key regulators of intracellular membrane trafficking, from the formation of transport vesicles to their fusion with membranes. Rabs cycle between an inactive GDP-bound form and an active GTP-bound form that is able to recruit to membranes different set of downstream effectors directly responsible for vesicle formation, movement, tethering and fusion. Plays a role in the initial events of the autophagic vacuole development which take place at specialized regions of the endoplasmic reticulum. Regulates vesicular transport between the endoplasmic reticulum and successive Golgi compartments. Required to modulate the compacted morphology of the Golgi. Promotes the recruitment of lipid phosphatase MTMR6 to the endoplasmic reticulum-Golgi intermediate compartment. The polypeptide is Ras-related protein Rab-1B (RAB1B) (Bos taurus (Bovine)).